The chain runs to 119 residues: Beta-2-microglobulin (119 aa).

An N-terminal signal peptide occupies residues 1–20; the sequence is MARFVVVALLVLLSLSGLEA. In terms of domain architecture, Ig-like C1-type spans 25 to 114; it reads PKIQVYSRHP…VTLSTPKTVK (90 aa). A disulfide bridge links C45 with C100.

The protein belongs to the beta-2-microglobulin family. Heterodimer of an alpha chain and a beta chain. Beta-2-microglobulin is the beta-chain of major histocompatibility complex class I molecules.

Its subcellular location is the secreted. Its function is as follows. Component of the class I major histocompatibility complex (MHC). Involved in the presentation of peptide antigens to the immune system. The chain is Beta-2-microglobulin (B2M) from Aotus lemurinus (Gray-bellied night monkey).